Here is a 240-residue protein sequence, read N- to C-terminus: Adiponectin (240 aa).

The N-terminal stretch at 1–17 (MLLQGALLLLLALPSHG) is a signal peptide. 5-hydroxylysine is present on lysine 28. Lysine 28 carries O-linked (Gal...) hydroxylysine glycosylation. The interval 29–100 (GACAGWMAGI…GTPGRKGEPG (72 aa)) is disordered. The residue at position 31 (cysteine 31) is an S-(2-succinyl)cysteine. 3 positions are modified to 4-hydroxyproline: proline 39, proline 42, and proline 48. A Collagen-like domain is found at 43 to 102 (GHNGTPGRDGRDGTPGEKGEKGDPGLVGPKGDTGETGITGIEGPRGFPGTPGRKGEPGES). The span at 50–65 (RDGRDGTPGEKGEKGD) shows a compositional bias: basic and acidic residues. 3 positions are modified to 5-hydroxylysine: lysine 60, lysine 63, and lysine 72. O-linked (Gal...) hydroxylysine glycosylation is found at lysine 60, lysine 63, and lysine 72. Proline 86 is subject to 4-hydroxyproline. Lysine 96 is modified (5-hydroxylysine). The O-linked (Gal...) hydroxylysine glycan is linked to lysine 96. Residues 103–240 (AYVYRSAFSV…GFLLYHNIVE (138 aa)) form the C1q domain.

Homomultimer. Forms trimers, hexamers and 12- to 18-mers. The trimers (low molecular weight complexes / LMW) are assembled via non-covalent interactions of the collagen-like domains in a triple helix and hydrophobic interactions within the globular C1q domain. Several trimers can associate to form disulfide-linked hexamers (middle molecular weight complexes / MMW) and larger complexes (higher molecular weight / HMW). The HMW-complex assembly is also modulated by the degree of lysine hydroxylation and glycosylation. LMW, MMW and HMW complexes bind to HBEGF, MMW and HMW complexes bind to PDGFB, and HMW complex binds to FGF2. Interacts with CTRP9 via the C1q domain (heterotrimeric complex). Post-translationally, HMW complexes are more extensively glycosylated than smaller oligomers. Hydroxylation and glycosylation of the lysine residues within the collagen-like domain of adiponectin seem to be critically involved in regulating the formation and/or secretion of HMW complexes and consequently contribute to the insulin-sensitizing activity of adiponectin in hepatocytes. O-glycosylated. O-linked glycans on hydroxylysine residues consist of Glc-Gal disaccharides bound to the oxygen atom of post-translationally added hydroxyl groups. O-linked glycosylations elsewhere disialylated with the structure Neu5Acalpha2-&gt;8Neu5Acalpha2-&gt;3Gal. Sialylated by alpha 2,8-sialyltransferase III. Desialylated forms are rapidly cleared from the circulation. Not N-glycosylated. In terms of processing, succination of Cys-31 by the Krebs cycle intermediate fumarate, which leads to S-(2-succinyl)cysteine residues, inhibits polymerization and secretion of adiponectin. Adiponectin is a major target for succination in both adipocytes and adipose tissue of diabetic mammals. It was proposed that succination of proteins is a biomarker of mitochondrial stress and accumulation of Krebs cycle intermediates in adipose tissue in diabetes and that succination of adiponectin may contribute to the decrease in plasma adiponectin in diabetes.

The protein resides in the secreted. Its activity is regulated as follows. Polymerization and secretion of adiponectin is inhibited by succination of cysteine residues by the Krebs cycle intermediate fumarate, which leads to S-(2-succinyl)cysteine residues. In terms of biological role, important adipokine involved in the control of fat metabolism and insulin sensitivity, with direct anti-diabetic, anti-atherogenic and anti-inflammatory activities. Stimulates AMPK phosphorylation and activation in the liver and the skeletal muscle, enhancing glucose utilization and fatty-acid combustion. Antagonizes TNF-alpha by negatively regulating its expression in various tissues such as liver and macrophages, and also by counteracting its effects. Inhibits endothelial NF-kappa-B signaling through a cAMP-dependent pathway. May play a role in cell growth, angiogenesis and tissue remodeling by binding and sequestering various growth factors with distinct binding affinities, depending on the type of complex, LMW, MMW or HMW. The protein is Adiponectin (ADIPOQ) of Bos taurus (Bovine).